Consider the following 368-residue polypeptide: 3-isopropylmalate dehydrogenase (368 aa).

79-91 (GPEWGTSSTVRPE) provides a ligand contact to NAD(+). R98, R108, R137, and D226 together coordinate substrate. Mg(2+) is bound by residues D226, D251, and D255. NAD(+) is bound at residue 291–303 (GSAPDISGKGIVN).

This sequence belongs to the isocitrate and isopropylmalate dehydrogenases family. In terms of assembly, homodimer. The cofactor is Mg(2+). It depends on Mn(2+) as a cofactor.

The protein localises to the cytoplasm. It carries out the reaction (2R,3S)-3-isopropylmalate + NAD(+) = 4-methyl-2-oxopentanoate + CO2 + NADH. The protein operates within amino-acid biosynthesis; L-leucine biosynthesis; L-leucine from 3-methyl-2-oxobutanoate: step 3/4. Catalyzes the oxidation of 3-carboxy-2-hydroxy-4-methylpentanoate (3-isopropylmalate) to 3-carboxy-4-methyl-2-oxopentanoate. The product decarboxylates to 4-methyl-2 oxopentanoate. In Sordaria macrospora, this protein is 3-isopropylmalate dehydrogenase (LEU1).